The sequence spans 147 residues: Lysozyme C (147 aa).

A signal peptide spans 1-18 (MRSLLILVLCFLPLAALG). Residues 19-147 (KVFGRCELAA…VQAWIRGCRL (129 aa)) enclose the C-type lysozyme domain. Cystine bridges form between C24-C145, C48-C133, C82-C98, and C94-C112. Active-site residues include E53 and D70. A substrate-binding site is contributed by D119.

Belongs to the glycosyl hydrolase 22 family. As to quaternary structure, monomer. In terms of tissue distribution, in the egg white and polymorphonuclear leukocytes.

The protein localises to the secreted. The catalysed reaction is Hydrolysis of (1-&gt;4)-beta-linkages between N-acetylmuramic acid and N-acetyl-D-glucosamine residues in a peptidoglycan and between N-acetyl-D-glucosamine residues in chitodextrins.. In terms of biological role, lysozymes have primarily a bacteriolytic function; those in tissues and body fluids are associated with the monocyte-macrophage system and enhance the activity of immunoagents. Has bacteriolytic activity against M.luteus. The chain is Lysozyme C (LYZ) from Gallus gallus (Chicken).